A 318-amino-acid polypeptide reads, in one-letter code: Endochitinase 3 (318 aa).

The N-terminal stretch at 1 to 18 (EFTIFSLLFSLLLLNASA) is a signal peptide. The region spanning 19–60 (EQCGSQAGGALCAPGLCCSKFGWCGNTNDYCGPGNCQSQCPG) is the Chitin-binding type-1 domain. 7 disulfides stabilise this stretch: C21–C36, C30–C42, C35–C49, C54–C58, C89–C152, C164–C172, and C271–C303. E134 (proton donor) is an active-site residue. Residues 312 to 318 (GLLVDTV) constitute a propeptide, removed in mature form, vacuolar targeting.

The protein belongs to the glycosyl hydrolase 19 family. Chitinase class I subfamily.

It localises to the vacuole. The catalysed reaction is Random endo-hydrolysis of N-acetyl-beta-D-glucosaminide (1-&gt;4)-beta-linkages in chitin and chitodextrins.. In terms of biological role, defense against chitin-containing fungal pathogens. The chain is Endochitinase 3 (CHTB3) from Solanum tuberosum (Potato).